We begin with the raw amino-acid sequence, 217 residues long: uncharacterized protein (217 aa).

This is an uncharacterized protein from Methanothermobacter thermautotrophicus (Methanobacterium thermoformicicum).